A 350-amino-acid chain; its full sequence is Zona pellucida-binding protein 1 (350 aa).

The N-terminal stretch at 1–44 is a signal peptide; it reads MEALAPGRAPRGRRRAGASGSVLSPLSLAAVLLCALLRAPPAVG. Asparagine 113, asparagine 186, and asparagine 339 each carry an N-linked (GlcNAc...) asparagine glycan.

Belongs to the zona pellucida-binding protein Sp38 family. Post-translationally, N-glycosylated. Expressed in testis (at protein level). Expressed in male germ cells.

The protein localises to the cytoplasmic vesicle. It localises to the secretory vesicle. The protein resides in the acrosome. Its subcellular location is the acrosome membrane. It is found in the secreted. Its function is as follows. Plays a role in acrosome compaction and sperm morphogenesis. Is implicated in sperm-oocyte interaction during fertilization. The polypeptide is Zona pellucida-binding protein 1 (Zpbp) (Mus musculus (Mouse)).